The chain runs to 189 residues: Probable DNA-directed RNA polymerase subunit delta (189 aa).

One can recognise an HTH HARE-type domain in the interval 14–81; it reads LSMIEVAHAI…GENVWALRTW (68 aa). Composition is skewed to acidic residues over residues 90–100 and 118–189; these read EVDHPEDDGDE and EGDD…EDEE. Positions 90-189 are disordered; it reads EVDHPEDDGD…DDLDDDEDEE (100 aa).

Belongs to the RpoE family. As to quaternary structure, RNAP is composed of a core of 2 alpha, a beta and a beta' subunits. The core is associated with a delta subunit and one of several sigma factors.

Participates in both the initiation and recycling phases of transcription. In the presence of the delta subunit, RNAP displays an increased specificity of transcription, a decreased affinity for nucleic acids, and an increased efficiency of RNA synthesis because of enhanced recycling. The sequence is that of Probable DNA-directed RNA polymerase subunit delta from Lactobacillus delbrueckii subsp. bulgaricus (strain ATCC BAA-365 / Lb-18).